The primary structure comprises 623 residues: MEKREFKAESKRLLDIVINSIYTNREIFLRELISNASDAIDKVYYKTLGDSSLTFNKDDYYIKIKPNKEERTLTISDKGIGMTEKELDENLGVIAKSGSLQFKKENEIKDGFDIIGQFGVGFYSGFLVADKITVITKAFGADKAYKWESDGVDGYTISEAEKDSFGTDIILHLKANDEDENYDEFLEEYKLKSLIKKYSDFIRYPIKLDVTKSRVKEGTENEHEEYVEEETVNSMVPLWRRNKNELTDDDYNNFYVEKRFGFDKPLRHMHISVDGMISYNSILYIPENIPYDYYTKEYEKGLELYSNGVLIMEKCSELLPDYFGFVKGIVDSQDLSLNISREMLQHDRQLSRIAKNIKTKIKNELESMMKNDRESYEKFYKSFGRQLKYGVYDDFGMNKDELKDLLMFYSSKEKKMVSLAEYVERMAEDQKYIYYAVGESNERIEKMPQTEMVLDKGYEILYFTEDVDEFAIKMLMNYKEKEFKSVSSGDLGIESEEENKKENEENKGIFEAMKEALGEKISAVKASSRLKNYPVCLSSEGEVSIEMEKILSAMPNNQGVKAQKVLEVNTNHEVFNSLKDALENDKDKFNLYTKLLYNQALLVEGLSIEDPVDFTNDICKLMK.

The interval 1 to 341 (MEKREFKAES…SQDLSLNISR (341 aa)) is a; substrate-binding. The segment at 342–549 (EMLQHDRQLS…EGEVSIEMEK (208 aa)) is b. The tract at residues 550-623 (ILSAMPNNQG…FTNDICKLMK (74 aa)) is c.

Belongs to the heat shock protein 90 family. As to quaternary structure, homodimer.

The protein resides in the cytoplasm. In terms of biological role, molecular chaperone. Has ATPase activity. This chain is Chaperone protein HtpG, found in Clostridium perfringens (strain ATCC 13124 / DSM 756 / JCM 1290 / NCIMB 6125 / NCTC 8237 / Type A).